Here is a 333-residue protein sequence, read N- to C-terminus: Photosystem II assembly lipoprotein Ycf48 (333 aa).

Positions 1 to 23 (MTRFVSSAINLLLVLVLGVSLSG) are cleaved as a signal peptide. C24 carries N-palmitoyl cysteine lipidation. Residue C24 is the site of S-diacylglycerol cysteine attachment.

The protein belongs to the Ycf48 family. Part of early PSII assembly complexes which includes D1 (psbA) and PsbI; not found in mature PSII. Binds to the lumenal side of PSII complexes. Interacts with YidC.

It is found in the cellular thylakoid membrane. Functionally, a factor required for optimal assembly of photosystem II (PSII), acting in the early stages of PSII assembly. Also plays a role in replacement of photodamaged D1 (psbA). Assists YidC in synthesis of chlorophyll-binding proteins. This Parasynechococcus marenigrum (strain WH8102) protein is Photosystem II assembly lipoprotein Ycf48.